The sequence spans 291 residues: Elongation factor Ts (291 aa).

The segment at 78–81 is involved in Mg(2+) ion dislocation from EF-Tu; it reads TDFV.

The protein belongs to the EF-Ts family.

It is found in the cytoplasm. Functionally, associates with the EF-Tu.GDP complex and induces the exchange of GDP to GTP. It remains bound to the aminoacyl-tRNA.EF-Tu.GTP complex up to the GTP hydrolysis stage on the ribosome. The protein is Elongation factor Ts of Ureaplasma parvum serovar 3 (strain ATCC 27815 / 27 / NCTC 11736).